Reading from the N-terminus, the 159-residue chain is 4-deoxy-4-sulfo-D-erythrose isomerase (159 aa).

The active-site Proton acceptor is the cysteine 66.

This sequence belongs to the LacAB/RpiB family.

The enzyme catalyses 4-deoxy-4-sulfo-D-erythrose = 4-deoxy-4-sulfo-D-erythrulose. Part of the sulfo-TK pathway, a D-sulfoquinovose degradation pathway that produces 2-hydroxyethane-1-sulfonate (isethionate). Catalyzes the isomerization of 4-deoxy-4-sulfo-D-erythrose (SE) to 4-deoxy-4-sulfo-D-erythrulose (SEu). The chain is 4-deoxy-4-sulfo-D-erythrose isomerase from Clostridium sp. (strain MSTE9).